A 577-amino-acid polypeptide reads, in one-letter code: Sulfite reductase [NADPH] hemoprotein beta-component (577 aa).

The [4Fe-4S] cluster site is built by Cys436, Cys442, Cys481, and Cys485. Cys485 contacts siroheme.

Belongs to the nitrite and sulfite reductase 4Fe-4S domain family. Alpha(8)-beta(8). The alpha component is a flavoprotein, the beta component is a hemoprotein. Requires siroheme as cofactor. The cofactor is [4Fe-4S] cluster.

The enzyme catalyses hydrogen sulfide + 3 NADP(+) + 3 H2O = sulfite + 3 NADPH + 4 H(+). Its pathway is sulfur metabolism; hydrogen sulfide biosynthesis; hydrogen sulfide from sulfite (NADPH route): step 1/1. In terms of biological role, component of the sulfite reductase complex that catalyzes the 6-electron reduction of sulfite to sulfide. This is one of several activities required for the biosynthesis of L-cysteine from sulfate. This Shewanella woodyi (strain ATCC 51908 / MS32) protein is Sulfite reductase [NADPH] hemoprotein beta-component.